The chain runs to 515 residues: Tyrosine decarboxylase 1 (515 aa).

2 tandem repeats follow at residues 81-138 (DDIT…TELE) and 141-192 (VTDW…GKDQ). The tract at residues 81-192 (DDITNHIVPG…KVLNKIGKDQ (112 aa)) is 2 X approximate tandem repeats. Alanine 105 is a substrate binding site. Threonine 169 and cysteine 170 together coordinate pyridoxal 5'-phosphate. Histidine 205 is a substrate binding site. The pyridoxal 5'-phosphate site is built by threonine 264 and asparagine 318. At lysine 321 the chain carries N6-(pyridoxal phosphate)lysine.

This sequence belongs to the group II decarboxylase family. Requires pyridoxal 5'-phosphate as cofactor. Mostly expressed in bulbs, and, to a lower extent, in stems, roots, leaves and flowers.

It catalyses the reaction L-tyrosine + H(+) = tyramine + CO2. It functions in the pathway alkaloid biosynthesis. In terms of biological role, catalyzes the decarboxylation of L-tyrosine to tyramine, which is converted to norbelladine, a precursor to all Amaryllidaceae alkaloids such as galanthamine, lycorine and haemanthamine, and including haemanthamine- and crinamine-type alkaloids, promising anticancer agents. The polypeptide is Tyrosine decarboxylase 1 (Narcissus pseudonarcissus (Daffodil)).